A 321-amino-acid polypeptide reads, in one-letter code: MSERSRGRRFPLTLDAVVERKPAERQREKRISSGVNAVSLPTPARTASAERASSTPAPGPGPQRVAGVDAAVGAVAASAVQARTQAAHAAAGGMASDRARQALVARVQAAGVTDARVLAAIGRVPRHLFVDAGLASQAYEDAALPIGHQQTISKPSVVGRMIELLLRERPEPSAQAAQVPAQPLSRVLEIGTGCGYQAAVLSQVAGEVYSIERIRPLHEKAKANLRPLRVPNIRLHYGDGMLGLPKAAPFDAIIVAAAGLEVPQALLDQLAIGGRLIAPVATDRAGGPSQQLVLIERRGRFQFHSTALEGVFFVPLKSGTV.

Over residues 21-31 the composition is skewed to basic and acidic residues; sequence KPAERQREKRI. Positions 21 to 65 are disordered; sequence KPAERQREKRISSGVNAVSLPTPARTASAERASSTPAPGPGPQRV. The segment covering 41 to 56 has biased composition (low complexity); it reads PTPARTASAERASSTP. The active site involves Ser-153.

It belongs to the methyltransferase superfamily. L-isoaspartyl/D-aspartyl protein methyltransferase family.

Its subcellular location is the cytoplasm. The catalysed reaction is [protein]-L-isoaspartate + S-adenosyl-L-methionine = [protein]-L-isoaspartate alpha-methyl ester + S-adenosyl-L-homocysteine. Its function is as follows. Catalyzes the methyl esterification of L-isoaspartyl residues in peptides and proteins that result from spontaneous decomposition of normal L-aspartyl and L-asparaginyl residues. It plays a role in the repair and/or degradation of damaged proteins. The protein is Protein-L-isoaspartate O-methyltransferase of Ralstonia nicotianae (strain ATCC BAA-1114 / GMI1000) (Ralstonia solanacearum).